The following is a 61-amino-acid chain: MTVKTLRVTQVRSANGRLETHKACLRGLGLRKPHHTVEVRGTPEILGMISKVSYLLKVEEI.

The protein belongs to the universal ribosomal protein uL30 family. In terms of assembly, part of the 50S ribosomal subunit.

The chain is Large ribosomal subunit protein uL30 from Methylococcus capsulatus (strain ATCC 33009 / NCIMB 11132 / Bath).